Reading from the N-terminus, the 154-residue chain is UPF0756 membrane protein BLi03063/BL00400 (154 aa).

4 helical membrane-spanning segments follow: residues 8–28 (FLIL…IIAV), 54–74 (WGVT…EIGF), 87–107 (WIAL…ITLL), and 117–137 (LVFG…GPLI).

The protein belongs to the UPF0756 family.

The protein localises to the cell membrane. This is UPF0756 membrane protein BLi03063/BL00400 from Bacillus licheniformis (strain ATCC 14580 / DSM 13 / JCM 2505 / CCUG 7422 / NBRC 12200 / NCIMB 9375 / NCTC 10341 / NRRL NRS-1264 / Gibson 46).